The primary structure comprises 137 residues: Proofreading thioesterase EntH (137 aa).

Glu63 functions as the Nucleophile or proton acceptor in the catalytic mechanism.

The protein belongs to the thioesterase PaaI family. In terms of assembly, homotetramer. Dimer of dimers. Interacts specifically with the aryl carrier protein (ArCP) domain of EntB.

The protein resides in the cytoplasm. It participates in siderophore biosynthesis; enterobactin biosynthesis. Functionally, required for optimal enterobactin synthesis. Acts as a proofreading enzyme that prevents EntB misacylation by hydrolyzing the thioester bound existing between EntB and wrongly charged molecules. This Cronobacter sakazakii (strain ATCC BAA-894) (Enterobacter sakazakii) protein is Proofreading thioesterase EntH.